We begin with the raw amino-acid sequence, 441 residues long: Trigger factor (441 aa).

Residues 175–257 (GDFISLSLHV…VNAVIEVVAP (83 aa)) form the PPIase FKBP-type domain.

The protein belongs to the FKBP-type PPIase family. Tig subfamily.

It localises to the cytoplasm. The catalysed reaction is [protein]-peptidylproline (omega=180) = [protein]-peptidylproline (omega=0). In terms of biological role, involved in protein export. Acts as a chaperone by maintaining the newly synthesized protein in an open conformation. Functions as a peptidyl-prolyl cis-trans isomerase. In Chlamydia abortus (strain DSM 27085 / S26/3) (Chlamydophila abortus), this protein is Trigger factor.